The following is a 110-amino-acid chain: Coiled-coil-helix-coiled-coil-helix domain-containing protein 5 (110 aa).

Met1 carries the N-acetylmethionine modification. CHCH domains lie at 9 to 52 (ARYC…PIIR) and 55 to 97 (RQAC…QPPR). 4 short sequence motifs (cx9C motif) span residues 12–22 (CGRELEQYGQC), 34–44 (CHYLKMSIAQC), 58–68 (CAQPFEAFEEC), and 79–89 (CAEHMRRFLQC). 4 disulfides stabilise this stretch: Cys12/Cys44, Cys22/Cys34, Cys58/Cys89, and Cys68/Cys79.

In terms of assembly, monomer.

The protein localises to the mitochondrion intermembrane space. The chain is Coiled-coil-helix-coiled-coil-helix domain-containing protein 5 (CHCHD5) from Homo sapiens (Human).